The primary structure comprises 1049 residues: Exotoxin PaxA (1049 aa).

4 consecutive transmembrane segments (helical) span residues 246 to 266, 311 to 331, 375 to 395, and 397 to 417; these read GLGL…FTLA, GPAA…LSFL, ITTI…ASAG, and LVGA…SGIL. Hemolysin-type calcium-binding repeat units lie at residues 744-761, 762-779, 780-797, 798-815, 826-843, and 844-861; these read KGSK…DDLL, NGND…NDEL, RGDN…NDKL, FGGN…DDEL, RGGK…SDFL, and DGGE…NDFY.

The protein belongs to the RTX prokaryotic toxin (TC 1.C.11) family.

It is found in the secreted. Its subcellular location is the host cell membrane. Functionally, paxA is associated with abortion cases in swine and septicemia in young piglets. Shows cohemolytic activity with the sphingomyelinase of S.aureus but is devoid of direct hemolytic activity. The protein is Exotoxin PaxA (paxA) of Pasteurella aerogenes.